The sequence spans 147 residues: Transcriptional regulator MraZ (147 aa).

SpoVT-AbrB domains follow at residues 5-47 (QQLR…SEKE) and 76-123 (TFEI…SKSK).

It belongs to the MraZ family. As to quaternary structure, forms oligomers.

Its subcellular location is the cytoplasm. The protein resides in the nucleoid. The chain is Transcriptional regulator MraZ from Mycoplasmopsis synoviae (strain 53) (Mycoplasma synoviae).